Reading from the N-terminus, the 857-residue chain is Catalase-peroxidase (857 aa).

Residues 207-330 (WHSAGTYRVS…LAAVQMGLIY (124 aa)) constitute a cross-link (tryptophyl-tyrosyl-methioninium (Trp-Tyr) (with M-356)). His-208 (proton acceptor) is an active-site residue. The segment at residues 330–356 (YVNPEGPNGKPDPIAAAKDIRETFGRM) is a cross-link (tryptophyl-tyrosyl-methioninium (Tyr-Met) (with W-207)). Residue His-371 participates in heme b binding.

The protein belongs to the peroxidase family. Peroxidase/catalase subfamily. In terms of assembly, homodimer or homotetramer. Heme b is required as a cofactor. Formation of the three residue Trp-Tyr-Met cross-link is important for the catalase, but not the peroxidase activity of the enzyme.

The enzyme catalyses H2O2 + AH2 = A + 2 H2O. It catalyses the reaction 2 H2O2 = O2 + 2 H2O. Its function is as follows. Bifunctional enzyme with both catalase and broad-spectrum peroxidase activity. This Rhodopirellula baltica (strain DSM 10527 / NCIMB 13988 / SH1) protein is Catalase-peroxidase.